A 2499-amino-acid chain; its full sequence is Probable polyketide synthase 22 (2499 aa).

Residues 11–430 form the Ketosynthase family 3 (KS3) domain; it reads DNQVAIVGLG…GSNACVLLSE (420 aa). Residues Cys-177, His-316, and His-354 each act as for beta-ketoacyl synthase activity in the active site. An acyl/malonyl transferases region spans residues 623-656; the sequence is GITPSIIVGHSLGEVASAFCSGMIDLETACFVIY. Ser-633 (for acyl/malonyl transferase activity) is an active-site residue. The N-terminal hotdog fold stretch occupies residues 922–1044; that stretch reads APINQLGNKN…SRILMKSLDV (123 aa). Residues 922–1209 enclose the PKS/mFAS DH domain; the sequence is APINQLGNKN…IASTLSTKSE (288 aa). The active-site Proton acceptor; for dehydratase activity is the His-956. The interval 1059 to 1209 is C-terminal hotdog fold; sequence NWSTLKREQL…IASTLSTKSE (151 aa). Asp-1121 serves as the catalytic Proton donor; for dehydratase activity. Residues 2414–2491 form the Carrier domain; sequence EKEFSIRQDI…QIINIVTTKV (78 aa). Position 2451 is an O-(pantetheine 4'-phosphoryl)serine (Ser-2451).

Requires pantetheine 4'-phosphate as cofactor.

In terms of biological role, probable polyketide synthase. This is Probable polyketide synthase 22 (pks22) from Dictyostelium discoideum (Social amoeba).